The following is a 552-amino-acid chain: MSDIAITICILALVAVIGLWIGHWKIRGVGLGIGGVLFGGIIVAHFMNQNGLKLDAHTLHFIQEFGLILFVYTIGIQVGPGFFASLLSAGLKLNGLATLIVVLGAVSVFVLYKVVNVDLDIILGIYSGAVTNTPSLGAGQQILTELGIENANSTMGMAYAMAYPFGICGILLSMWLIRLFFKIKVEEEEKQFQKASGQDKESLTTVNVKVTNPNLSGLRLIDIPGFDNKDVVCSRLKRQENISVPSADTIIAIDDVLHLVGEINALKKMKLVIGEEIDMPMTHLAGDLRSERIVVTNEKVLGKRIKHLGIHKKYGVVISRLNRAGVELVPTANTALQFGDVLHIVGRSDTIGNATSIIGNAQQKLQQVQMLPVFIGIGLGVLLGSIPFYIPGFPVALKLGLAGGPLVVALILARIGSVGKLYWFMPPSANLALREIGIVLFLAVVGLKSGGGFVDTLVNGQGLEWMGYGMFITFIPLMITGIIARLYMKLNYLSLCGLLAGSMTDPPALAFANAIKEDSGIAALSYATVYPLSMFLRIMSPQLLAILLWTAM.

5 consecutive transmembrane segments (helical) span residues 4-24 (IAIT…IGHW), 28-48 (GVGL…HFMN), 67-87 (LILF…ASLL), 95-115 (GLAT…YKVV), and 157-177 (MAYA…MWLI). RCK C-terminal domains are found at residues 190 to 275 (KQFQ…VIGE) and 277 to 360 (IDMP…IIGN). A run of 6 helical transmembrane segments spans residues 370 to 390 (MLPV…PFYI), 402 to 424 (AGGP…LYWF), 438 to 458 (IVLF…DTLV), 463 to 483 (LEWM…TGII), 495 to 515 (LCGL…ANAI), and 529 to 549 (VYPL…ILLW).

It belongs to the AAE transporter (TC 2.A.81) family. YidE subfamily.

The protein resides in the cell membrane. This is Putative transport protein HSM_0534 from Histophilus somni (strain 2336) (Haemophilus somnus).